Here is a 667-residue protein sequence, read N- to C-terminus: UvrABC system protein B (667 aa).

The Helicase ATP-binding domain occupies 28–185 (NNFKQGLKEQ…NKLIELKYQR (158 aa)). ATP is bound at residue 41–48 (GATGTGKT). Positions 94–117 (YYDYYQPEAYVASSDTYIEKDSKI) match the Beta-hairpin motif. One can recognise a Helicase C-terminal domain in the interval 432–594 (QMDDLYFEIK…VTPTALNKTI (163 aa)). The 36-residue stretch at 629-664 (NKEIKRLQKTMKEAAKALDFEKAATLRDLILDLEKK) folds into the UVR domain.

It belongs to the UvrB family. In terms of assembly, forms a heterotetramer with UvrA during the search for lesions. Interacts with UvrC in an incision complex.

It localises to the cytoplasm. In terms of biological role, the UvrABC repair system catalyzes the recognition and processing of DNA lesions. A damage recognition complex composed of 2 UvrA and 2 UvrB subunits scans DNA for abnormalities. Upon binding of the UvrA(2)B(2) complex to a putative damaged site, the DNA wraps around one UvrB monomer. DNA wrap is dependent on ATP binding by UvrB and probably causes local melting of the DNA helix, facilitating insertion of UvrB beta-hairpin between the DNA strands. Then UvrB probes one DNA strand for the presence of a lesion. If a lesion is found the UvrA subunits dissociate and the UvrB-DNA preincision complex is formed. This complex is subsequently bound by UvrC and the second UvrB is released. If no lesion is found, the DNA wraps around the other UvrB subunit that will check the other stand for damage. The sequence is that of UvrABC system protein B from Aster yellows witches'-broom phytoplasma (strain AYWB).